We begin with the raw amino-acid sequence, 119 residues long: Large ribosomal subunit protein bL20 (119 aa).

This sequence belongs to the bacterial ribosomal protein bL20 family.

In terms of biological role, binds directly to 23S ribosomal RNA and is necessary for the in vitro assembly process of the 50S ribosomal subunit. It is not involved in the protein synthesizing functions of that subunit. The polypeptide is Large ribosomal subunit protein bL20 (Geobacillus thermodenitrificans (strain NG80-2)).